Consider the following 831-residue polypeptide: Zinc phosphodiesterase ELAC protein 2 (831 aa).

The N-terminal 16 residues, 1–16, are a transit peptide targeting the mitochondrion; the sequence is MWALRSLLRPLGLRTM. Disordered regions lie at residues 15–47 and 179–227; these read TMSQGSARRPRPSKDPLRHLRTREKRGPGPGGP and SERR…ANRK. Residues 186–212 are compositionally biased toward polar residues; sequence QQPSQSPRTSPNRLSPKQSSDSGSAEN. 5 positions are modified to phosphoserine: S191, S195, S200, S204, and S732. Residues 791–831 are disordered; it reads LTQQADSPEDREPQQKRAHTDEPHSPQSKKESVANTLGARV. Position 792 is a phosphothreonine (T792). Residues S797 and S815 each carry the phosphoserine modification. Residues 798 to 822 are compositionally biased toward basic and acidic residues; sequence PEDREPQQKRAHTDEPHSPQSKKES.

Belongs to the RNase Z family. As to quaternary structure, homodimer. Interacts with PTCD1. Zn(2+) is required as a cofactor.

It localises to the mitochondrion. The protein resides in the mitochondrion matrix. Its subcellular location is the mitochondrion nucleoid. The protein localises to the nucleus. The enzyme catalyses Endonucleolytic cleavage of RNA, removing extra 3' nucleotides from tRNA precursor, generating 3' termini of tRNAs. A 3'-hydroxy group is left at the tRNA terminus and a 5'-phosphoryl group is left at the trailer molecule.. Its function is as follows. Zinc phosphodiesterase, which displays mitochondrial tRNA 3'-processing endonuclease activity. Involved in tRNA maturation, by removing a 3'-trailer from precursor tRNA. Associates with mitochondrial DNA complexes at the nucleoids to initiate RNA processing and ribosome assembly. The sequence is that of Zinc phosphodiesterase ELAC protein 2 (Elac2) from Mus musculus (Mouse).